A 404-amino-acid polypeptide reads, in one-letter code: Phospho-N-acetylmuramoyl-pentapeptide-transferase (404 aa).

10 helical membrane-spanning segments follow: residues 30–50 (SAAILSLCISIFLGKRLIIFF), 73–93 (IPTMGGIIIIAATVVPTLLFA), 100–120 (IMLLLISIIWMGLIGFIDDYI), 132–152 (GKFKIVGQVALGVIVGITLIF), 209–229 (YMWIVYVLFMIFIIAAVSNGA), 242–262 (TSAIIGTTLAILAYVSGNVIF), 274–294 (LAELAIFCTAFVGACVGFLWY), 301–321 (IFMGDTGSLAIGSVIAVLAIV), 326–346 (LMIPLLCGIFFIETLSVIIQV), and 381–401 (KIVTRFWIVGIVLAILSLVTL).

Belongs to the glycosyltransferase 4 family. MraY subfamily. Requires Mg(2+) as cofactor.

It localises to the cell inner membrane. It carries out the reaction UDP-N-acetyl-alpha-D-muramoyl-L-alanyl-gamma-D-glutamyl-meso-2,6-diaminopimeloyl-D-alanyl-D-alanine + di-trans,octa-cis-undecaprenyl phosphate = di-trans,octa-cis-undecaprenyl diphospho-N-acetyl-alpha-D-muramoyl-L-alanyl-D-glutamyl-meso-2,6-diaminopimeloyl-D-alanyl-D-alanine + UMP. It functions in the pathway cell wall biogenesis; peptidoglycan biosynthesis. Functionally, catalyzes the initial step of the lipid cycle reactions in the biosynthesis of the cell wall peptidoglycan: transfers peptidoglycan precursor phospho-MurNAc-pentapeptide from UDP-MurNAc-pentapeptide onto the lipid carrier undecaprenyl phosphate, yielding undecaprenyl-pyrophosphoryl-MurNAc-pentapeptide, known as lipid I. The sequence is that of Phospho-N-acetylmuramoyl-pentapeptide-transferase from Amoebophilus asiaticus (strain 5a2).